Reading from the N-terminus, the 166-residue chain is MKTPRIPIAIQQAVMRSLREHLAKANLKLERRYAEPTLVYQQRGTSAGTAWLEKNEIRLNPVLLLENQQEFIDEVVPHELAHLLVWQHFGRVAPHGKEWKWMMENVLGVPARRTHRFELDSVRQNTFPYRCRCQQHQLTVRRHNRVVRGEATYRCVHCGDLLVAEK.

Positions 19–164 constitute a SprT-like domain; that stretch reads REHLAKANLK…CVHCGDLLVA (146 aa). Residue His-78 coordinates Zn(2+). The active site involves Glu-79. His-82 lines the Zn(2+) pocket.

This sequence belongs to the SprT family. The cofactor is Zn(2+).

The protein localises to the cytoplasm. The chain is Protein SprT from Klebsiella pneumoniae (strain 342).